The chain runs to 308 residues: Isoaspartyl peptidase/L-asparaginase (308 aa).

Methionine 1 is subject to N-acetylmethionine. Threonine 168 serves as the catalytic Nucleophile. Substrate contacts are provided by residues 196–199 and 219–222; these read RVGD and TGHG.

The protein belongs to the Ntn-hydrolase family. Heterodimer of an alpha and beta chain produced by autocleavage. This heterodimer may then dimerize in turn, giving rise to a heterotetramer. Post-translationally, cleaved into an alpha and beta chain by autocatalysis; this activates the enzyme. The N-terminal residue of the beta subunit is responsible for the nucleophile hydrolase activity.

The protein resides in the cytoplasm. The enzyme catalyses L-asparagine + H2O = L-aspartate + NH4(+). The catalysed reaction is Cleavage of a beta-linked Asp residue from the N-terminus of a polypeptide.. Its function is as follows. Has both L-asparaginase and beta-aspartyl peptidase activity. May be involved in the production of L-aspartate, which can act as an excitatory neurotransmitter in some brain regions. Is highly active with L-Asp beta-methyl ester. Besides, has catalytic activity toward beta-aspartyl dipeptides and their methyl esters, including beta-L-Asp-L-Phe, beta-L-Asp-L-Phe methyl ester (aspartame), beta-L-Asp-L-Ala, beta-L-Asp-L-Leu and beta-L-Asp-L-Lys. Does not have aspartylglucosaminidase activity and is inactive toward GlcNAc-L-Asn. Likewise, has no activity toward glutamine. The polypeptide is Isoaspartyl peptidase/L-asparaginase (ASRGL1) (Macaca fascicularis (Crab-eating macaque)).